A 431-amino-acid polypeptide reads, in one-letter code: Glucose-1-phosphate adenylyltransferase (431 aa).

K39 provides a ligand contact to beta-D-fructose 1,6-bisphosphate. AMP contacts are provided by R40, H46, and R52. Y114 is a binding site for alpha-D-glucose 1-phosphate. An AMP-binding site is contributed by R130. Residues G179, 194–195 (EK), and S212 contribute to the alpha-D-glucose 1-phosphate site. AMP contacts are provided by E370 and R386. Residues 419–423 (REMLR) and 429–431 (QER) contribute to the beta-D-fructose 1,6-bisphosphate site.

It belongs to the bacterial/plant glucose-1-phosphate adenylyltransferase family. Homotetramer.

The enzyme catalyses alpha-D-glucose 1-phosphate + ATP + H(+) = ADP-alpha-D-glucose + diphosphate. Its pathway is glycan biosynthesis; glycogen biosynthesis. Allosterically activated by fructose-1,6-bisphosphate (F16BP) and inhibited by AMP. In terms of biological role, involved in the biosynthesis of ADP-glucose, a building block required for the elongation reactions to produce glycogen. Catalyzes the reaction between ATP and alpha-D-glucose 1-phosphate (G1P) to produce pyrophosphate and ADP-Glc. In Salmonella paratyphi C (strain RKS4594), this protein is Glucose-1-phosphate adenylyltransferase.